The primary structure comprises 176 residues: Large ribosomal subunit protein uL6 (176 aa).

It belongs to the universal ribosomal protein uL6 family. In terms of assembly, part of the 50S ribosomal subunit.

This protein binds to the 23S rRNA, and is important in its secondary structure. It is located near the subunit interface in the base of the L7/L12 stalk, and near the tRNA binding site of the peptidyltransferase center. The sequence is that of Large ribosomal subunit protein uL6 from Burkholderia lata (strain ATCC 17760 / DSM 23089 / LMG 22485 / NCIMB 9086 / R18194 / 383).